The primary structure comprises 424 residues: GTPase HflX (424 aa).

Residues 194-364 (YTVALTGYTG…AVVEMLPEKV (171 aa)) enclose the Hflx-type G domain. GTP contacts are provided by residues 200–207 (GYTGAGKT), 225–229 (FATLS), 246–249 (DTIG), 314–317 (NKID), and 342–344 (SAA). The Mg(2+) site is built by T207 and T227.

This sequence belongs to the TRAFAC class OBG-HflX-like GTPase superfamily. HflX GTPase family. In terms of assembly, monomer. Associates with the 50S ribosomal subunit. The cofactor is Mg(2+).

The protein localises to the cytoplasm. Its function is as follows. GTPase that associates with the 50S ribosomal subunit and may have a role during protein synthesis or ribosome biogenesis. The chain is GTPase HflX from Thermofilum pendens (strain DSM 2475 / Hrk 5).